Reading from the N-terminus, the 133-residue chain is MPEETLLAFDFGEKKIGIAIGNTLTRQARPLEIIFSETRAARFGRIGQLLQEWQPQRAVVGLPLTLDGQEQPASARARRFANQLHGRFGLAVELVDERGSSMEAQQLLGTHAADDAVAAAVILQRYLDTLPQP.

This sequence belongs to the YqgF nuclease family.

Its subcellular location is the cytoplasm. Functionally, could be a nuclease involved in processing of the 5'-end of pre-16S rRNA. The chain is Putative pre-16S rRNA nuclease from Bordetella bronchiseptica (strain ATCC BAA-588 / NCTC 13252 / RB50) (Alcaligenes bronchisepticus).